Consider the following 643-residue polypeptide: Phosphomethylpyrimidine synthase (643 aa).

Residues asparagine 221, methionine 250, tyrosine 279, histidine 315, 335–337 (SRG), 376–379 (DGLR), and glutamate 415 each bind substrate. Histidine 419 contacts Zn(2+). Tyrosine 442 is a binding site for substrate. Histidine 483 serves as a coordination point for Zn(2+). [4Fe-4S] cluster contacts are provided by cysteine 563, cysteine 566, and cysteine 571.

It belongs to the ThiC family. As to quaternary structure, homodimer. The cofactor is [4Fe-4S] cluster.

It catalyses the reaction 5-amino-1-(5-phospho-beta-D-ribosyl)imidazole + S-adenosyl-L-methionine = 4-amino-2-methyl-5-(phosphooxymethyl)pyrimidine + CO + 5'-deoxyadenosine + formate + L-methionine + 3 H(+). The protein operates within cofactor biosynthesis; thiamine diphosphate biosynthesis. In terms of biological role, catalyzes the synthesis of the hydroxymethylpyrimidine phosphate (HMP-P) moiety of thiamine from aminoimidazole ribotide (AIR) in a radical S-adenosyl-L-methionine (SAM)-dependent reaction. In Nitrobacter hamburgensis (strain DSM 10229 / NCIMB 13809 / X14), this protein is Phosphomethylpyrimidine synthase.